Consider the following 182-residue polypeptide: Peptide deformylase (182 aa).

2 residues coordinate Fe cation: Cys110 and His153. Glu154 is an active-site residue. Position 157 (His157) interacts with Fe cation.

It belongs to the polypeptide deformylase family. Fe(2+) is required as a cofactor.

It carries out the reaction N-terminal N-formyl-L-methionyl-[peptide] + H2O = N-terminal L-methionyl-[peptide] + formate. Its function is as follows. Removes the formyl group from the N-terminal Met of newly synthesized proteins. Requires at least a dipeptide for an efficient rate of reaction. N-terminal L-methionine is a prerequisite for activity but the enzyme has broad specificity at other positions. The sequence is that of Peptide deformylase from Halalkalibacterium halodurans (strain ATCC BAA-125 / DSM 18197 / FERM 7344 / JCM 9153 / C-125) (Bacillus halodurans).